The following is a 157-amino-acid chain: Isotocin-neurophysin IT 1 (157 aa).

The signal sequence occupies residues 1–20 (MFGTSVSALCLLFLLSVCTA). Residues C21 and C26 are joined by a disulfide bond. Position 29 is a glycine amide (G29). Cystine bridges form between C42–C86, C45–C59, C53–C76, C60–C66, C93–C106, C100–C118, and C107–C112.

Belongs to the vasopressin/oxytocin family. Post-translationally, seven disulfide bonds are present in neurophysin.

Its subcellular location is the secreted. Its function is as follows. Isotocin causes contraction of smooth muscles. This chain is Isotocin-neurophysin IT 1, found in Oncorhynchus masou (Cherry salmon).